The following is a 176-amino-acid chain: COA8 family protein CG14806, mitochondrial (176 aa).

A mitochondrion-targeting transit peptide spans 1–23 (MNKCFRCQPRISLFQFSLPRCYA).

Belongs to the COA8 family.

The protein localises to the mitochondrion inner membrane. May be required for cytochrome c complex (COX) assembly and function, COX being the terminal component of the mitochondrial respiratory chain. In terms of biological role, (Microbial infection) Required for optimal replication of E.chaffeensis. In Drosophila melanogaster (Fruit fly), this protein is COA8 family protein CG14806, mitochondrial.